We begin with the raw amino-acid sequence, 396 residues long: Elongation factor Tu (396 aa).

In terms of domain architecture, tr-type G spans 10–205 (KPHVNIGTIG…ACDESIPDPE (196 aa)). A G1 region spans residues 19 to 26 (GHVDHGKT). A GTP-binding site is contributed by 19–26 (GHVDHGKT). A Mg(2+)-binding site is contributed by Thr-26. The G2 stretch occupies residues 62-66 (GITIN). Residues 83–86 (DAPG) are G3. Residues 83-87 (DAPGH) and 138-141 (NKCD) contribute to the GTP site. Residues 138–141 (NKCD) are G4. Positions 175 to 177 (SAL) are G5.

The protein belongs to the TRAFAC class translation factor GTPase superfamily. Classic translation factor GTPase family. EF-Tu/EF-1A subfamily. As to quaternary structure, monomer.

The protein resides in the cytoplasm. It carries out the reaction GTP + H2O = GDP + phosphate + H(+). In terms of biological role, GTP hydrolase that promotes the GTP-dependent binding of aminoacyl-tRNA to the A-site of ribosomes during protein biosynthesis. The polypeptide is Elongation factor Tu (Corynebacterium jeikeium (strain K411)).